Consider the following 163-residue polypeptide: MEHYRKAGSVELPAPSPMPQLPPDTLEMRVRDGSKIRNLLGLALGRLEGGSARHVVFSGSGRAAGKAVSCAEIVKRRVPGLHQLTKLRFLQTEDSWVPASPDTGLDPLTVRRHVPAVWVLLSRDPLDPNECGYQPPGAPPGLGSMPSSSCGPRSRRRARDTRS.

Disordered regions lie at residues 1–22 (MEHY…PQLP) and 129–163 (NECG…DTRS). The span at 143 to 152 (GSMPSSSCGP) shows a compositional bias: low complexity. Basic residues predominate over residues 153-163 (RSRRRARDTRS).

It belongs to the histone-like Alba family.

It is found in the nucleus. Its function is as follows. May be a component of ribonuclease P or MRP. In Homo sapiens (Human), this protein is Ribonuclease P protein subunit p25-like protein (RPP25L).